A 649-amino-acid polypeptide reads, in one-letter code: Exolysin (649 aa).

A helical transmembrane segment spans residues 37 to 57 (LIYTIIVLVVAAVVGLVIFIV). Residues 184-268 (KDIIDNKLRE…KKATDDFKKK (85 aa)) adopt a coiled-coil conformation. Positions 258 to 275 (AKKATDDFKKKKQADKNK) are enriched in basic and acidic residues. The segment at 258 to 325 (AKKATDDFKK…QFQTRDSKGQ (68 aa)) is disordered. Residues 278–312 (ASKPSPGPKPAPKPSPGPKPAPKPSPGPKPSPGPS) are compositionally biased toward pro residues. The tract at residues 407–649 (GGGGGGGNVS…KNVKISKWSP (243 aa)) is catalytic.

Requires Ca(2+) as cofactor. The cofactor is Mg(2+).

The protein localises to the membrane. Its subcellular location is the virion. Inhibited by Mn(2+), Cu(2+), Co(2+), Fe(2+), Zn(2+), Ni(2+), EDTA and EGTA. During viral entry, involved in the degradation of the host cell wall at the site of attachment. The polypeptide is Exolysin (Chlorella (PBCV-1)).